A 323-amino-acid polypeptide reads, in one-letter code: 4-hydroxythreonine-4-phosphate dehydrogenase (323 aa).

Residue T133 coordinates substrate. A divalent metal cation-binding residues include H161, H206, and H261. K269, N278, and R287 together coordinate substrate.

The protein belongs to the PdxA family. In terms of assembly, homodimer. It depends on Zn(2+) as a cofactor. Mg(2+) is required as a cofactor. The cofactor is Co(2+).

The protein resides in the cytoplasm. It carries out the reaction 4-(phosphooxy)-L-threonine + NAD(+) = 3-amino-2-oxopropyl phosphate + CO2 + NADH. The protein operates within cofactor biosynthesis; pyridoxine 5'-phosphate biosynthesis; pyridoxine 5'-phosphate from D-erythrose 4-phosphate: step 4/5. In terms of biological role, catalyzes the NAD(P)-dependent oxidation of 4-(phosphooxy)-L-threonine (HTP) into 2-amino-3-oxo-4-(phosphooxy)butyric acid which spontaneously decarboxylates to form 3-amino-2-oxopropyl phosphate (AHAP). This chain is 4-hydroxythreonine-4-phosphate dehydrogenase, found in Xanthomonas axonopodis pv. citri (strain 306).